The sequence spans 316 residues: MEKLAEEIINGRRLTRSDDLEFLLTCDLKKICDGANKIRKTLCGESVDLCTIINGRSGKCSENCKFCAQSNHHKTEIKKYDFLDPNVILKDCKKNEANGVHRYSIVTAGRALVGSDFDKAVQAYKMMNKECSINLCASHGFLSEEQFVLLKEAGVTMYHANIETSKRNFHNICTTHSYDDKIKEIKLAQNAGLKVCSGGIIGMGETWYDRIDMAISLSELGVISIPINVLMPIKGTPLENLKRISNYDILRTIAIFRYINPTAYIRMAAGRTYFEDGGIEIFQSGSNATITGDMLTTVGNNTCQDKIMLQTLGFSI.

Positions 42–268 constitute a Radical SAM core domain; sequence LCGESVDLCT…INPTAYIRMA (227 aa). Positions 60, 64, and 67 each coordinate [4Fe-4S] cluster. 4 residues coordinate [2Fe-2S] cluster: serine 104, cysteine 136, cysteine 196, and arginine 266.

It belongs to the radical SAM superfamily. Biotin synthase family. Homodimer. [4Fe-4S] cluster is required as a cofactor. Requires [2Fe-2S] cluster as cofactor.

It catalyses the reaction (4R,5S)-dethiobiotin + (sulfur carrier)-SH + 2 reduced [2Fe-2S]-[ferredoxin] + 2 S-adenosyl-L-methionine = (sulfur carrier)-H + biotin + 2 5'-deoxyadenosine + 2 L-methionine + 2 oxidized [2Fe-2S]-[ferredoxin]. Its pathway is cofactor biosynthesis; biotin biosynthesis; biotin from 7,8-diaminononanoate: step 2/2. Catalyzes the conversion of dethiobiotin (DTB) to biotin by the insertion of a sulfur atom into dethiobiotin via a radical-based mechanism. This chain is Biotin synthase, found in Clostridium beijerinckii (strain ATCC 51743 / NCIMB 8052) (Clostridium acetobutylicum).